The chain runs to 456 residues: Bifunctional protein GlmU (456 aa).

The tract at residues 1-229 (MLNNAMSVVI…LSEVEGVNNR (229 aa)) is pyrophosphorylase. UDP-N-acetyl-alpha-D-glucosamine is bound by residues 11-14 (LAAG), Lys25, Gln76, 81-82 (GT), 103-105 (YGD), Gly140, Glu154, Asn169, and Asn227. Asp105 contributes to the Mg(2+) binding site. Asn227 contacts Mg(2+). Positions 230–250 (LQLSRLERVYQSEQAEKLLLA) are linker. The segment at 251–456 (GVMLRDPARF…EGWRRPVKKK (206 aa)) is N-acetyltransferase. 2 residues coordinate UDP-N-acetyl-alpha-D-glucosamine: Arg333 and Lys351. His363 serves as the catalytic Proton acceptor. UDP-N-acetyl-alpha-D-glucosamine is bound by residues Tyr366 and Asn377. Acetyl-CoA-binding positions include Ala380, 386-387 (NY), Ser405, Ala423, and Arg440.

It in the N-terminal section; belongs to the N-acetylglucosamine-1-phosphate uridyltransferase family. In the C-terminal section; belongs to the transferase hexapeptide repeat family. As to quaternary structure, homotrimer. It depends on Mg(2+) as a cofactor.

The protein resides in the cytoplasm. It catalyses the reaction alpha-D-glucosamine 1-phosphate + acetyl-CoA = N-acetyl-alpha-D-glucosamine 1-phosphate + CoA + H(+). The enzyme catalyses N-acetyl-alpha-D-glucosamine 1-phosphate + UTP + H(+) = UDP-N-acetyl-alpha-D-glucosamine + diphosphate. The protein operates within nucleotide-sugar biosynthesis; UDP-N-acetyl-alpha-D-glucosamine biosynthesis; N-acetyl-alpha-D-glucosamine 1-phosphate from alpha-D-glucosamine 6-phosphate (route II): step 2/2. It functions in the pathway nucleotide-sugar biosynthesis; UDP-N-acetyl-alpha-D-glucosamine biosynthesis; UDP-N-acetyl-alpha-D-glucosamine from N-acetyl-alpha-D-glucosamine 1-phosphate: step 1/1. Its pathway is bacterial outer membrane biogenesis; LPS lipid A biosynthesis. Functionally, catalyzes the last two sequential reactions in the de novo biosynthetic pathway for UDP-N-acetylglucosamine (UDP-GlcNAc). The C-terminal domain catalyzes the transfer of acetyl group from acetyl coenzyme A to glucosamine-1-phosphate (GlcN-1-P) to produce N-acetylglucosamine-1-phosphate (GlcNAc-1-P), which is converted into UDP-GlcNAc by the transfer of uridine 5-monophosphate (from uridine 5-triphosphate), a reaction catalyzed by the N-terminal domain. This is Bifunctional protein GlmU from Escherichia coli O45:K1 (strain S88 / ExPEC).